Consider the following 156-residue polypeptide: Ribonuclease H (156 aa).

An RNase H type-1 domain is found at 1–142 (MGKQVEIFTD…CDELARAAAN (142 aa)). Positions 10, 48, 70, and 134 each coordinate Mg(2+).

Belongs to the RNase H family. As to quaternary structure, monomer. Mg(2+) is required as a cofactor.

The protein resides in the cytoplasm. It carries out the reaction Endonucleolytic cleavage to 5'-phosphomonoester.. Functionally, endonuclease that specifically degrades the RNA of RNA-DNA hybrids. The protein is Ribonuclease H of Photorhabdus luminescens (Xenorhabdus luminescens).